Consider the following 239-residue polypeptide: MFLEVETHCHTIASGHAYNTLEEMVAEAKNKGLKGICITDHGPEMPGSCSSLYFYNLVVVPRKIDGIMVFRGCEANIIDYEGSVDLPESALNRLDFVIASLHDVCIPPGTILDHTRALISAIKNPNILCIGHPGNPLYEIDKEAVVKTAKEHNKAIEINNASFYVREKSRENCIEILKLCKKYGVYIAMGSDAHFKTDIARCDVTRKLIEEYEFPHELIVNKSLENFLEFLRLHGKNIE.

His-8, His-10, His-16, His-41, Glu-74, His-102, His-132, Asp-192, and His-194 together coordinate Zn(2+).

This sequence belongs to the PHP family. Requires Zn(2+) as cofactor.

This chain is Probable phosphatase Csac_1188, found in Caldicellulosiruptor saccharolyticus (strain ATCC 43494 / DSM 8903 / Tp8T 6331).